Consider the following 495-residue polypeptide: Probable cytosol aminopeptidase (495 aa).

Mn(2+) is bound by residues lysine 267 and aspartate 272. Lysine 279 is an active-site residue. Positions 290, 349, and 351 each coordinate Mn(2+). Arginine 353 is an active-site residue.

It belongs to the peptidase M17 family. Requires Mn(2+) as cofactor.

It localises to the cytoplasm. The enzyme catalyses Release of an N-terminal amino acid, Xaa-|-Yaa-, in which Xaa is preferably Leu, but may be other amino acids including Pro although not Arg or Lys, and Yaa may be Pro. Amino acid amides and methyl esters are also readily hydrolyzed, but rates on arylamides are exceedingly low.. It catalyses the reaction Release of an N-terminal amino acid, preferentially leucine, but not glutamic or aspartic acids.. Presumably involved in the processing and regular turnover of intracellular proteins. Catalyzes the removal of unsubstituted N-terminal amino acids from various peptides. The sequence is that of Probable cytosol aminopeptidase from Histophilus somni (strain 2336) (Haemophilus somnus).